A 227-amino-acid chain; its full sequence is Floral homeotic protein DEFICIENS (227 aa).

The 55-residue stretch at 3-57 (RGKIQIKRIENQTNRQVTYSKRRNGLFKKAHELSVLCDAKVSIIMISSTQKLHEY) folds into the MADS-box domain. Residues 84–174 (YEKMQEHLKK…VLEFDARRED (91 aa)) enclose the K-box domain.

Its subcellular location is the nucleus. In terms of biological role, transcription factor involved in the genetic control of flower development. Acts in conjunction with GLOBOSA (glo). The sequence is that of Floral homeotic protein DEFICIENS (DEFA) from Antirrhinum majus (Garden snapdragon).